The following is a 371-amino-acid chain: Cytochrome b (371 aa).

The next 4 helical transmembrane spans lie at 25–45 (FGSLLLTCLMLQILTGFFLAI), 69–90 (WIMQNTHAIGASLFFICIYTHI), 105–125 (WLSGTTLLIILMATAFFGYVL), and 170–190 (FFALHFILPFIIISMSSIHII). Residues histidine 75 and histidine 89 each coordinate heme b. The heme b site is built by histidine 174 and histidine 188. Histidine 193 is an a ubiquinone binding site. The next 4 membrane-spanning stretches (helical) occupy residues 218 to 238 (YKDMTMVSIMIMLLLMVMTFA), 280 to 300 (LGGTLALFLSIIILTTTPFTH), 312 to 332 (LTQILFWTLIATFTTITWTAT), and 339 to 358 (FIYISQMTSIMYFSFFIMNP).

This sequence belongs to the cytochrome b family. As to quaternary structure, the cytochrome bc1 complex contains 3 respiratory subunits (MT-CYB, CYC1 and UQCRFS1), 2 core proteins (UQCRC1 and UQCRC2) and probably 6 low-molecular weight proteins. Requires heme b as cofactor.

The protein resides in the mitochondrion inner membrane. Component of the ubiquinol-cytochrome c reductase complex (complex III or cytochrome b-c1 complex) that is part of the mitochondrial respiratory chain. The b-c1 complex mediates electron transfer from ubiquinol to cytochrome c. Contributes to the generation of a proton gradient across the mitochondrial membrane that is then used for ATP synthesis. The protein is Cytochrome b (MT-CYB) of Micruroides euryxanthus (Sonoran coral snake).